Here is a 60-residue protein sequence, read N- to C-terminus: Large ribosomal subunit protein uL30 (60 aa).

This sequence belongs to the universal ribosomal protein uL30 family. As to quaternary structure, part of the 50S ribosomal subunit.

This is Large ribosomal subunit protein uL30 from Histophilus somni (strain 2336) (Haemophilus somnus).